The sequence spans 309 residues: Ribonuclease Z (309 aa).

Zn(2+)-binding residues include His63, His65, Asp67, His68, His141, Asp212, and His270. The active-site Proton acceptor is Asp67.

This sequence belongs to the RNase Z family. Homodimer. Requires Zn(2+) as cofactor.

The enzyme catalyses Endonucleolytic cleavage of RNA, removing extra 3' nucleotides from tRNA precursor, generating 3' termini of tRNAs. A 3'-hydroxy group is left at the tRNA terminus and a 5'-phosphoryl group is left at the trailer molecule.. Functionally, zinc phosphodiesterase, which displays some tRNA 3'-processing endonuclease activity. Probably involved in tRNA maturation, by removing a 3'-trailer from precursor tRNA. In Lactobacillus delbrueckii subsp. bulgaricus (strain ATCC 11842 / DSM 20081 / BCRC 10696 / JCM 1002 / NBRC 13953 / NCIMB 11778 / NCTC 12712 / WDCM 00102 / Lb 14), this protein is Ribonuclease Z.